A 154-amino-acid polypeptide reads, in one-letter code: UPF0547 protein C16orf87 homolog (154 aa).

The tract at residues 43–119 is disordered; the sequence is NAKHSEKSPP…KHEEEREKQE (77 aa). The segment covering 68 to 84 has biased composition (basic and acidic residues); the sequence is VRREKINSTVNKDLENR. Serine 91 is subject to Phosphoserine. A coiled-coil region spans residues 104 to 132; sequence KSSSAKKHEEEREKQEKEIDIYANLSDEK. The segment covering 109–119 has biased composition (basic and acidic residues); that stretch reads KKHEEEREKQE.

This sequence belongs to the UPF0547 family.

The sequence is that of UPF0547 protein C16orf87 homolog from Mus musculus (Mouse).